A 150-amino-acid polypeptide reads, in one-letter code: Putative solute carrier family 19 member 4 (150 aa).

Residues 118 to 137 (PSVREGACNEKSTENKKPQD) are disordered. Residues 124-136 (ACNEKSTENKKPQ) are compositionally biased toward basic and acidic residues.

It belongs to the reduced folate carrier (RFC) transporter (TC 2.A.48) family.

The chain is Putative solute carrier family 19 member 4 from Homo sapiens (Human).